The sequence spans 135 residues: Glutaredoxin-C4 (135 aa).

Residues 32–132 form the Glutaredoxin domain; sequence ADFVKKTISS…KLLGVSGNKE (101 aa). A disulfide bridge links cysteine 52 with cysteine 55.

This sequence belongs to the glutaredoxin family. CPYC subfamily.

Its subcellular location is the cytoplasm. In terms of biological role, has a glutathione-disulfide oxidoreductase activity in the presence of NADPH and glutathione reductase. Reduces low molecular weight disulfides and proteins. The polypeptide is Glutaredoxin-C4 (GRXC4) (Arabidopsis thaliana (Mouse-ear cress)).